A 310-amino-acid polypeptide reads, in one-letter code: Methionyl-tRNA formyltransferase (310 aa).

110–113 (SLLP) provides a ligand contact to (6S)-5,6,7,8-tetrahydrofolate.

The protein belongs to the Fmt family.

It carries out the reaction L-methionyl-tRNA(fMet) + (6R)-10-formyltetrahydrofolate = N-formyl-L-methionyl-tRNA(fMet) + (6S)-5,6,7,8-tetrahydrofolate + H(+). In terms of biological role, attaches a formyl group to the free amino group of methionyl-tRNA(fMet). The formyl group appears to play a dual role in the initiator identity of N-formylmethionyl-tRNA by promoting its recognition by IF2 and preventing the misappropriation of this tRNA by the elongation apparatus. This chain is Methionyl-tRNA formyltransferase, found in Streptomyces griseus subsp. griseus (strain JCM 4626 / CBS 651.72 / NBRC 13350 / KCC S-0626 / ISP 5235).